The chain runs to 209 residues: GTP cyclohydrolase-2 (209 aa).

49 to 53 (RIHSE) serves as a coordination point for GTP. Zn(2+)-binding residues include C54, C65, and C67. GTP is bound by residues Q70, 92 to 94 (EGR), and T114. D126 acts as the Proton acceptor in catalysis. Residue R128 is the Nucleophile of the active site. The GTP site is built by T149 and K154.

The protein belongs to the GTP cyclohydrolase II family. Zn(2+) is required as a cofactor.

It catalyses the reaction GTP + 4 H2O = 2,5-diamino-6-hydroxy-4-(5-phosphoribosylamino)-pyrimidine + formate + 2 phosphate + 3 H(+). The protein operates within cofactor biosynthesis; riboflavin biosynthesis; 5-amino-6-(D-ribitylamino)uracil from GTP: step 1/4. In terms of biological role, catalyzes the conversion of GTP to 2,5-diamino-6-ribosylamino-4(3H)-pyrimidinone 5'-phosphate (DARP), formate and pyrophosphate. The sequence is that of GTP cyclohydrolase-2 from Shewanella pealeana (strain ATCC 700345 / ANG-SQ1).